The primary structure comprises 290 residues: Purine nucleoside phosphorylase (290 aa).

Residue 68-69 coordinates phosphate; it reads RN. A substrate-binding site is contributed by Met-204. Position 205 (Thr-205) interacts with phosphate.

This sequence belongs to the PNP/MTAP phosphorylase family. MTAP subfamily. Homotrimer.

The protein localises to the cytoplasm. It is found in the nucleus. The catalysed reaction is a purine D-ribonucleoside + phosphate = a purine nucleobase + alpha-D-ribose 1-phosphate. It functions in the pathway purine metabolism; purine nucleoside salvage. Functionally, purine nucleoside phosphorylase involved in purine salvage. The chain is Purine nucleoside phosphorylase from Drosophila melanogaster (Fruit fly).